Here is a 482-residue protein sequence, read N- to C-terminus: tRNA sulfurtransferase (482 aa).

In terms of domain architecture, THUMP spans 61–165; it reads EQAIEALACI…GEELFIVSAI (105 aa). Residues 183–184, Lys-265, Gly-287, and Gln-296 each bind ATP; that span reads LI. Cys-344 and Cys-456 are disulfide-bonded. Residues 404–482 form the Rhodanese domain; sequence SGDNEVILDI…GFANVKVYRP (79 aa). Cys-456 (cysteine persulfide intermediate) is an active-site residue.

It belongs to the ThiI family.

The protein localises to the cytoplasm. The catalysed reaction is [ThiI sulfur-carrier protein]-S-sulfanyl-L-cysteine + a uridine in tRNA + 2 reduced [2Fe-2S]-[ferredoxin] + ATP + H(+) = [ThiI sulfur-carrier protein]-L-cysteine + a 4-thiouridine in tRNA + 2 oxidized [2Fe-2S]-[ferredoxin] + AMP + diphosphate. It catalyses the reaction [ThiS sulfur-carrier protein]-C-terminal Gly-Gly-AMP + S-sulfanyl-L-cysteinyl-[cysteine desulfurase] + AH2 = [ThiS sulfur-carrier protein]-C-terminal-Gly-aminoethanethioate + L-cysteinyl-[cysteine desulfurase] + A + AMP + 2 H(+). It functions in the pathway cofactor biosynthesis; thiamine diphosphate biosynthesis. Functionally, catalyzes the ATP-dependent transfer of a sulfur to tRNA to produce 4-thiouridine in position 8 of tRNAs, which functions as a near-UV photosensor. Also catalyzes the transfer of sulfur to the sulfur carrier protein ThiS, forming ThiS-thiocarboxylate. This is a step in the synthesis of thiazole, in the thiamine biosynthesis pathway. The sulfur is donated as persulfide by IscS. In Aeromonas hydrophila subsp. hydrophila (strain ATCC 7966 / DSM 30187 / BCRC 13018 / CCUG 14551 / JCM 1027 / KCTC 2358 / NCIMB 9240 / NCTC 8049), this protein is tRNA sulfurtransferase.